Reading from the N-terminus, the 833-residue chain is MKVWGAHGEFCARHQWEVIVATLALLACAASVERNGPGNRSEHCAGWARACPGLEAEYQAADAVIMTFVRCAALLYAYYQISNLHKIASKYLLIIAGVFSTFASFIFTSAVASLFWSELASIKDAPFLFLLVADVARGARMAKAGWSAGEDQGKRVGRALALLGPTATLDTLLAVLLVGVGALSGVPRLEHMCTFACLALLVDYLVFVTFYPACLSLVADFASGRKEMSPDSPFSEADLKPNPVVQRVKMIMAAGLLCVHLTSRWPWSSDNGIIEGPTDTLTPTSNDNILLHSYVKWFSVSADYIVIATLLCALIIKFVFFEEQRNWVIDMNDMTVKEVVQEQARSKPKFSVGDDSNSEVSTQTEGVLEDEWPTLSPSSSAAKLNSKKRPMAECLEIYRSEGACVSLSDEEVVMLVEQSHIPLHRLEAVLGDPLRGVRLRRKVVGARFQTELAIKQLPYLNYDYSKVLNACCENVIGYVGVPVGYAGPLVVDGKPYMIPMATTEGALVASTNRGAKAIGIRGVTSVVEDVGMTRAPAIKLPNVVRAHECRQWIDNKDNYAVIKEAFDSTSRFARLQEIHIGVDGATLYLRFRATTGDAMGMNMVSKGAENALKLLKNYFPDMEVISLSGNYCSDKKAAAINWVKGRGKRVVCETTITSDSLRTIFKTDAKTLARCNKIKNLSGSALAGSIGGNNAHAANMVTAIYIATGQDPAQNVTSSNCSTNMEVCGENGEDLYVTCTMPSLEVGTVGGGTILTGQGACLDILGVKGAGARPAENSARLASLICATVLAGELSLMAALVNSDLVKSHMRHNRSTVNVQVQAENITLKVPTL.

Helical transmembrane passes span Phe-10–Val-32, Tyr-91–Ser-117, Leu-160–Val-180, and Ser-301–Phe-321. The linker stretch occupies residues Glu-322–Ser-419. A disordered region spans residues Lys-347–Thr-374. Residues Asp-354–Glu-365 show a composition bias toward polar residues. Positions His-420 to Leu-833 are catalytic. Residues Glu-504 and Lys-635 each act as charge relay system in the active site. Asn-680 carries N-linked (GlcNAc...) asparagine glycosylation. Asp-711 serves as the catalytic Charge relay system. Residues Asn-715 and Asn-720 are each glycosylated (N-linked (GlcNAc...) asparagine). His-809 serves as the catalytic Proton donor. N-linked (GlcNAc...) asparagine glycans are attached at residues Asn-813 and Asn-825.

This sequence belongs to the HMG-CoA reductase family.

It localises to the endoplasmic reticulum membrane. The catalysed reaction is (R)-mevalonate + 2 NADP(+) + CoA = (3S)-3-hydroxy-3-methylglutaryl-CoA + 2 NADPH + 2 H(+). The protein operates within metabolic intermediate biosynthesis; (R)-mevalonate biosynthesis; (R)-mevalonate from acetyl-CoA: step 3/3. With respect to regulation, the activity of HMG-CoA-reductase is suppressed by exogenous mevalonate. Functionally, synthesis of mevalonate for the production of non-sterol isoprenoids, which are essential for growth differentiation. The protein is 3-hydroxy-3-methylglutaryl-coenzyme A reductase (HMGR) of Agrotis ipsilon (Black cutworm moth).